We begin with the raw amino-acid sequence, 366 residues long: Chorismate synthase (366 aa).

2 residues coordinate NADP(+): R48 and R54. FMN-binding positions include R125–S127, N238–A239, G278, K293–S297, and R319.

The protein belongs to the chorismate synthase family. In terms of assembly, homotetramer. FMNH2 serves as cofactor.

It catalyses the reaction 5-O-(1-carboxyvinyl)-3-phosphoshikimate = chorismate + phosphate. The protein operates within metabolic intermediate biosynthesis; chorismate biosynthesis; chorismate from D-erythrose 4-phosphate and phosphoenolpyruvate: step 7/7. Functionally, catalyzes the anti-1,4-elimination of the C-3 phosphate and the C-6 proR hydrogen from 5-enolpyruvylshikimate-3-phosphate (EPSP) to yield chorismate, which is the branch point compound that serves as the starting substrate for the three terminal pathways of aromatic amino acid biosynthesis. This reaction introduces a second double bond into the aromatic ring system. In Burkholderia vietnamiensis (strain G4 / LMG 22486) (Burkholderia cepacia (strain R1808)), this protein is Chorismate synthase.